The sequence spans 117 residues: uncharacterized protein (117 aa).

This is an uncharacterized protein from Schizosaccharomyces pombe (strain 972 / ATCC 24843) (Fission yeast).